Here is a 743-residue protein sequence, read N- to C-terminus: Beta-galactosidase (743 aa).

E388 (proton donor) is an active-site residue. The active-site Nucleophile is the E453.

The protein belongs to the glycosyl hydrolase 2 family. As to quaternary structure, homodimer.

It catalyses the reaction Hydrolysis of terminal non-reducing beta-D-galactose residues in beta-D-galactosides.. In terms of biological role, beta-galactosidase. This Thermoanaerobacter pseudethanolicus (strain ATCC 33223 / 39E) (Clostridium thermohydrosulfuricum) protein is Beta-galactosidase (lacZ).